Consider the following 665-residue polypeptide: DNA ligase (665 aa).

NAD(+)-binding positions include 31-35 (DQEFD), 80-81 (SL), and glutamate 110. The N6-AMP-lysine intermediate role is filled by lysine 112. Residues arginine 133, glutamate 170, lysine 285, and lysine 309 each coordinate NAD(+). The Zn(2+) site is built by cysteine 403, cysteine 406, cysteine 421, and cysteine 427. The region spanning 587 to 665 (EHTDKLAGKS…SEEEFLQMIE (79 aa)) is the BRCT domain.

This sequence belongs to the NAD-dependent DNA ligase family. LigA subfamily. Requires Mg(2+) as cofactor. It depends on Mn(2+) as a cofactor.

It catalyses the reaction NAD(+) + (deoxyribonucleotide)n-3'-hydroxyl + 5'-phospho-(deoxyribonucleotide)m = (deoxyribonucleotide)n+m + AMP + beta-nicotinamide D-nucleotide.. Its function is as follows. DNA ligase that catalyzes the formation of phosphodiester linkages between 5'-phosphoryl and 3'-hydroxyl groups in double-stranded DNA using NAD as a coenzyme and as the energy source for the reaction. It is essential for DNA replication and repair of damaged DNA. This Phocaeicola vulgatus (strain ATCC 8482 / DSM 1447 / JCM 5826 / CCUG 4940 / NBRC 14291 / NCTC 11154) (Bacteroides vulgatus) protein is DNA ligase.